The following is a 566-amino-acid chain: MDAEHLKRLEGREAEHIPDILNEFNKKHADLLVFDSFHSDNQWHELWLAIFGILDDAQLGHLHTQCLNTVRILTRDEFSLQTNYIEHEVSQLLRLARVEASSLKLPATPDELKQQEEGQLQLQEQPSLAQSDIIAEALKCLCNLVYQSADCRRQCLRQHCLDAILKRVASSMRHPCALEYYDMKLLFLLTALEPAARTRLQIDLNGLTYMTKWLDDKLAEPSCSEEQLNIICELLKVMFNVTSAPDKSPNEYEIQSLHLTGVLRELLLRFGKMATDKERSVVTHAINLLTNISSSCLIELTLKCSNAEEQPKKAVEGVAKAKPAKCCALCFEKRNVRCLTVLLNYLRQALAQQEAEASSHELLSPVLTVLVKCSRSDRVMRHYLRQEILPPLRDVSQRPEIGQELRNHLCRFLTLPAMILRDLAAELLFVLCKEDVGRMIKYTGYGNAAGLFAKRGILDCRRVEGADYSSDSEDSDTEEYKKHQQGINPVLGCVEPKSKHNPLDDMTEEQKESEALQLVNLIEQLRQGGIVKPALIDKDGKPQPLEHILQLQEELPQQQLEQKRKT.

This sequence belongs to the synembryn family. In terms of assembly, interacts with GDP-bound G(i)-alpha protein. Does not interact with G-alpha proteins when they are in complex with subunits beta and gamma. Interacts with Frq2 in a Ca(2+)-independent manner but does not interact with Frq1.

Its subcellular location is the cytoplasm. It localises to the cell cortex. It is found in the presynapse. Its function is as follows. Chaperone that specifically binds and folds some, but not all, nascent G alpha proteins prior to G protein heterotrimer formation, promoting their stability and activity. Also acts as a guanine nucleotide exchange factor (GEF) for G alpha proteins by stimulating exchange of bound GDP for free GTP. Plays a key role in asymmetric spindle positioning, a step for asymmetric cell division that generates cell diversity during development by activating G(i) alpha protein independently of G-protein coupled receptors. Required during gastrulation and sensory organ precursor (SOP) formation. Plays a role in positively regulating synapse number and neurotransmitter release. This Drosophila pseudoobscura pseudoobscura (Fruit fly) protein is Chaperone Ric-8 (ric8a).